The following is a 580-amino-acid chain: Arginine--tRNA ligase (580 aa).

The 'HIGH' region signature appears at 131–141 (ANPTGPMHVGH).

Belongs to the class-I aminoacyl-tRNA synthetase family. In terms of assembly, monomer.

It is found in the cytoplasm. It catalyses the reaction tRNA(Arg) + L-arginine + ATP = L-arginyl-tRNA(Arg) + AMP + diphosphate. In Cereibacter sphaeroides (strain ATCC 17023 / DSM 158 / JCM 6121 / CCUG 31486 / LMG 2827 / NBRC 12203 / NCIMB 8253 / ATH 2.4.1.) (Rhodobacter sphaeroides), this protein is Arginine--tRNA ligase.